The following is a 211-amino-acid chain: Phosphoglycerate mutase (211 aa).

Substrate-binding positions include 14–21 and 27–28; these read RHGESEWN and TG. Residue His-15 is the Tele-phosphohistidine intermediate of the active site. Residue Thr-37 is modified to Phosphothreonine. Ser-62 carries the phosphoserine modification. Residues Arg-66, 93–96, Lys-104, 120–121, and 164–165 contribute to the substrate site; these read ERYY, RR, and GN. Residue Glu-93 is the Proton donor/acceptor of the active site. Tyr-96 is modified (phosphotyrosine). Ser-166 carries the phosphoserine modification.

It belongs to the phosphoglycerate mutase family. BPG-dependent PGAM subfamily. As to quaternary structure, monomer. The N-terminus is blocked.

The enzyme catalyses (2R)-2-phosphoglycerate = (2R)-3-phosphoglycerate. It functions in the pathway carbohydrate degradation; glycolysis; pyruvate from D-glyceraldehyde 3-phosphate: step 3/5. The protein is Phosphoglycerate mutase (gpm1) of Schizosaccharomyces pombe (strain 972 / ATCC 24843) (Fission yeast).